The primary structure comprises 360 residues: G-protein coupled receptor 183 (360 aa).

Residues 1–30 lie on the Extracellular side of the membrane; it reads MDIKMDNFTTPSAASLESDCDLYAHHHTAR. A glycan (N-linked (GlcNAc...) asparagine) is linked at Asn7. Residues 31 to 56 traverse the membrane as a helical segment; that stretch reads ILMPLHYSIVFIIGLVGNLLALIVII. Over 57 to 76 the chain is Cytoplasmic; sequence QNRKKINSTTLYSTNLVISD. Residues 77-94 traverse the membrane as a helical segment; that stretch reads ILFTTALPTRIAYYALGF. Residue Arg86 participates in 7alpha,25-dihydroxycholesterol binding. Topologically, residues 95 to 104 are extracellular; the sequence is DWRIGDALCR. Cys103 and Cys180 form a disulfide bridge. Residues 105 to 126 form a helical membrane-spanning segment; the sequence is ITALVFYINTYAGVNFMTCLSI. 7alpha,25-dihydroxycholesterol-binding residues include Tyr111 and Tyr115. An interaction with G proteins region spans residues 125–133; that stretch reads SIDRFFAVV. Residues 127–148 are Cytoplasmic-facing; sequence DRFFAVVHPLRYNKIKRIEHAK. Residues 149–167 traverse the membrane as a helical segment; the sequence is CICIFVWILVFGQTLPLLI. The Extracellular segment spans residues 168–191; the sequence is NPMSKQEAERTTCMEYPNFEETKS. The chain crosses the membrane as a helical span at residues 192–214; the sequence is LPWILLGACFIGYVLPLVIILIC. The Cytoplasmic segment spans residues 215–240; that stretch reads YSQICCKLFKTAKQNPLTEKSGVNKK. A helical membrane pass occupies residues 241-264; sequence ALNTIIFIIVVFVVCFTPYHVAII. 7alpha,25-dihydroxycholesterol is bound at residue Tyr259. Residues 265-286 are Extracellular-facing; it reads QHMIKKLRLPGLLECSQRHSFQ. A helical membrane pass occupies residues 287-311; the sequence is ISLHFTVCLMNFNCCMDPFIYFFAC. Residues 312-360 lie on the Cytoplasmic side of the membrane; it reads KGYKRKVMKMLKRQVSVSISSAVRSAPEENSREMTETQMMIHSKSLNGK. At Ser327 the chain carries Phosphoserine. Residues 339-360 are disordered; that stretch reads EENSREMTETQMMIHSKSLNGK. Residues 347 to 360 are compositionally biased toward polar residues; the sequence is ETQMMIHSKSLNGK.

It belongs to the G-protein coupled receptor 1 family. In terms of assembly, homodimer and heterodimer. Heterodimerizes with CXCR5; leading to modulate the interaction between of CXCL13 and CXCR5.

The protein localises to the cell membrane. In terms of biological role, G-protein coupled receptor expressed in lymphocytes that acts as a chemotactic receptor for B-cells, T-cells, splenic dendritic cells, monocytes/macrophages and astrocytes. Receptor for oxysterol 7-alpha,25-dihydroxycholesterol (7-alpha,25-OHC) and other related oxysterols. Mediates cell positioning and movement of a number of cells by binding the 7-alpha,25-OHC ligand that forms a chemotactic gradient. Binding of 7-alpha,25-OHC mediates the correct localization of B-cells during humoral immune responses. Guides B-cell movement along the B-cell zone-T-cell zone boundary and later to interfollicular and outer follicular regions. Its specific expression during B-cell maturation helps position B-cells appropriately for mounting T-dependent antibody responses. Collaborates with CXCR5 to mediate B-cell migration; probably by forming a heterodimer with CXCR5 that affects the interaction between of CXCL13 and CXCR5. Also acts as a chemotactic receptor for some T-cells upon binding to 7-alpha,25-OHC ligand. Promotes follicular helper T (Tfh) cells differentiation by positioning activated T-cells at the follicle-T-zone interface, promoting contact of newly activated CD4 T-cells with activated dendritic cells and exposing them to Tfh-cell-promoting inducible costimulator (ICOS) ligand. Expression in splenic dendritic cells is required for their homeostasis, localization and ability to induce B- and T-cell responses: GPR183 acts as a chemotactic receptor in dendritic cells that mediates the accumulation of CD4(+) dendritic cells in bridging channels. Regulates migration of astrocytes and is involved in communication between astrocytes and macrophages. Promotes osteoclast precursor migration to bone surfaces. Signals constitutively through G(i)-alpha, but not G(s)-alpha or G(q)-alpha. Signals constitutively also via MAPK1/3 (ERK1/2). This Bos taurus (Bovine) protein is G-protein coupled receptor 183 (GPR183).